The chain runs to 124 residues: Large ribosomal subunit protein bL12 (124 aa).

The protein belongs to the bacterial ribosomal protein bL12 family. As to quaternary structure, homodimer. Part of the ribosomal stalk of the 50S ribosomal subunit. Forms a multimeric L10(L12)X complex, where L10 forms an elongated spine to which 2 to 4 L12 dimers bind in a sequential fashion. Binds GTP-bound translation factors.

Functionally, forms part of the ribosomal stalk which helps the ribosome interact with GTP-bound translation factors. Is thus essential for accurate translation. This Burkholderia lata (strain ATCC 17760 / DSM 23089 / LMG 22485 / NCIMB 9086 / R18194 / 383) protein is Large ribosomal subunit protein bL12.